Here is a 181-residue protein sequence, read N- to C-terminus: Capsid protein VP4 (181 aa).

Its subcellular location is the virion. In terms of biological role, VP4 self-assembles to form, together with capsid protein VP10, an icosahedral caspid of 87 nm in diameter, with a T=43 symmetry and composed of 420 hexamers and 12 pentamers. VP4 proteins arrange into hexons, while VP10 proteins form the pentameric densities located at the 5-fold axes in the virion. The stoichiometry of VP4:VP10 is 42:1. The chain is Capsid protein VP4 from Sulfolobus (SPV1).